A 556-amino-acid polypeptide reads, in one-letter code: Glycosyl hydrolase 5 family protein (556 aa).

An N-terminal signal peptide occupies residues 1–28 (MTSAGVAPTALRLLTALLLLLVAAPSHS). N-linked (GlcNAc...) asparagine glycans are attached at residues N102 and N113. Residue E208 is the Proton donor/acceptor of the active site. 3 N-linked (GlcNAc...) asparagine glycosylation sites follow: N212, N290, and N307. The active-site Nucleophile is the E473. 2 N-linked (GlcNAc...) asparagine glycosylation sites follow: N474 and N479.

It belongs to the glycosyl hydrolase 5 (cellulase A) family. Glycosylated.

Its function is as follows. May have glycosyl hydrolase activity. In Chamaecyparis obtusa (Hinoki false-cypress), this protein is Glycosyl hydrolase 5 family protein.